Here is a 255-residue protein sequence, read N- to C-terminus: Venom allergen-1 (255 aa).

The N-terminal stretch at 1–21 is a signal peptide; that stretch reads MASHVIVKFITAAILIGSCYA. An SCP domain is found at 65–210; it reads LKKHNELRAE…VIKYYLVCNY (146 aa). N-linked (GlcNAc...) asparagine glycosylation is found at N146 and N209.

The protein belongs to the CRISP family. Interacts with human LRPPRC; the interaction interrupts association between BECN1 and LRPPRC. Interacts with human CD4. In terms of assembly, (Microbial infection) Interacts with Zika virus envelope protein E and Zika virus-like particles; the interaction does not affect Zika virus replication in human endothelial cells and keratinocytes. In terms of tissue distribution, saliva (at protein level). Female salivary gland. No or low-level expression in female hemolymph, midgut, Malpighian tubule system and ovary. No or low-level expression in male tissues.

The protein localises to the secreted. It localises to the host endosome. The protein resides in the host mitochondrion. Activates autophagy in human monocytic cells, dendritic cells and macrophages. Promotes activation of human CD4(+) T-cells. Does not affect cytokine expression in human monocytic cells. Functionally, (Microbial infection) Promotes dengue virus type 2 replication in human monocytic cells, dendritic cells and macrophages. Pro-viral properties are linked to BECN1-mediated autophagy activation in the host. Does not directly interact with the purified envelope protein of dengue virus type 2. Its function is as follows. (Microbial infection) Promotes Zika virus replication in human monocytic cells, dendritic cells and macrophages. Facilitates Zika virus transmission from infected mosquitoes to the host in mouse model. Pro-viral properties are linked to BECN1-mediated autophagy activation in the host. Does not affect Zika virus replication in human endothelial cells and keratinocytes. In terms of biological role, (Microbial infection) Promotes Semliki Forest virus replication in human monocytic cells. (Microbial infection) Does not influence Batai virus replication in human monocytic cells. This Aedes aegypti (Yellowfever mosquito) protein is Venom allergen-1.